Here is a 470-residue protein sequence, read N- to C-terminus: MSTNEGSLWGGRFADGPADALAALSKSTHFDWVLAPYDIAASKAHARVLFSAGLLTEDQRDGLLAGLDSLASDVADGSFAPLVTDEDVHGALERGLIDRVGAELGGRLRAGRSRNDQVATLFRAWLRDAIRRVADGVLGVVSALATQAAAHPTAIMPGKTHLQSAQPVLLAHHLLAHAHPLLRDVERLADFDKRAAVSPYGAGALAGSSLGLDPDAIAAELGFDSAADNSIDATAARDFAAEAAFVLAMIGVDLSRLAEDIILWSTTEFGYVTLHDAWSTGSSIMPQKKNPDIAELARGKSGRLIGNLTGLLATLKAQPLAYNRDLQEDKEPVFDSVAQLELLLPAVAGLVSTLRFDVDRMAELAPLGYTLATDVAEWLVRRGVPFRVAHEAAGAAVRAAEARGVGLEDLEDAELTGIHPELTGDVREVLTVEGSVNSRDARGGTAPVQVAKQLNVVRDTADRLRLALRR.

It belongs to the lyase 1 family. Argininosuccinate lyase subfamily.

It localises to the cytoplasm. It catalyses the reaction 2-(N(omega)-L-arginino)succinate = fumarate + L-arginine. The protein operates within amino-acid biosynthesis; L-arginine biosynthesis; L-arginine from L-ornithine and carbamoyl phosphate: step 3/3. This is Argininosuccinate lyase from Mycobacterium sp. (strain JLS).